The sequence spans 510 residues: Calmodulin-binding receptor-like cytoplasmic kinase 3 (510 aa).

The N-terminal stretch at 1-30 (MGGDDLSFTRLVITALFGLLMLLQIKETSA) is a signal peptide. The span at 166-178 (VSSFEMSPSSEKI) shows a compositional bias: polar residues. The tract at residues 166 to 209 (VSSFEMSPSSEKIPQSPFRAPPSPSRVPQSPSRYAMSPRPSRLG) is disordered. Thr214 is modified (phosphothreonine). A Protein kinase domain is found at 225 to 499 (FADSHQIGEG…MEAVGKQLWA (275 aa)). Residues 231–239 (IGEGGFGVV) and Lys253 contribute to the ATP site. The segment at 240–265 (FKGVLDDGQVVAIKRAKKEHFENLRT) is caM-binding. Residue Asp350 is the Proton acceptor of the active site. Ser354 carries the post-translational modification Phosphoserine. Residues Thr386 and Thr391 each carry the phosphothreonine modification. Tyr399 is subject to Phosphotyrosine.

This sequence belongs to the protein kinase superfamily. Ser/Thr protein kinase family. In terms of assembly, interacts with calmodulin (CaM) in a Ca(2+)-dependent manner.

Its subcellular location is the cytoplasm. It carries out the reaction L-seryl-[protein] + ATP = O-phospho-L-seryl-[protein] + ADP + H(+). The catalysed reaction is L-threonyl-[protein] + ATP = O-phospho-L-threonyl-[protein] + ADP + H(+). The protein is Calmodulin-binding receptor-like cytoplasmic kinase 3 (CRCK3) of Arabidopsis thaliana (Mouse-ear cress).